The sequence spans 153 residues: ATP synthase subunit b' (153 aa).

A helical transmembrane segment spans residues 20–40 (TLPLMAVQVVLLTFILNALFF).

It belongs to the ATPase B chain family. In terms of assembly, F-type ATPases have 2 components, F(1) - the catalytic core - and F(0) - the membrane proton channel. F(1) has five subunits: alpha(3), beta(3), gamma(1), delta(1), epsilon(1). F(0) has four main subunits: a(1), b(1), b'(1) and c(10-14). The alpha and beta chains form an alternating ring which encloses part of the gamma chain. F(1) is attached to F(0) by a central stalk formed by the gamma and epsilon chains, while a peripheral stalk is formed by the delta, b and b' chains.

It is found in the cellular thylakoid membrane. In terms of biological role, f(1)F(0) ATP synthase produces ATP from ADP in the presence of a proton or sodium gradient. F-type ATPases consist of two structural domains, F(1) containing the extramembraneous catalytic core and F(0) containing the membrane proton channel, linked together by a central stalk and a peripheral stalk. During catalysis, ATP synthesis in the catalytic domain of F(1) is coupled via a rotary mechanism of the central stalk subunits to proton translocation. Its function is as follows. Component of the F(0) channel, it forms part of the peripheral stalk, linking F(1) to F(0). The b'-subunit is a diverged and duplicated form of b found in plants and photosynthetic bacteria. The chain is ATP synthase subunit b' from Prochlorococcus marinus (strain NATL2A).